Consider the following 355-residue polypeptide: Ubiquinone biosynthesis protein COQ4 homolog, mitochondrial (355 aa).

Residues His134, Asp135, His138, and Glu150 each coordinate Zn(2+).

The protein belongs to the COQ4 family. Component of a multi-subunit COQ enzyme complex. It depends on Zn(2+) as a cofactor.

The protein resides in the mitochondrion inner membrane. It catalyses the reaction a 4-hydroxy-3-methoxy-5-(all-trans-polyprenyl)benzoate + H(+) = a 2-methoxy-6-(all-trans-polyprenyl)phenol + CO2. Its pathway is cofactor biosynthesis; ubiquinone biosynthesis. Its function is as follows. Lyase that catalyzes the C1-decarboxylation of 4-hydroxy-3-methoxy-5-(all-trans-polyprenyl)benzoic acid into 2-methoxy-6-(all-trans-polyprenyl)phenol during ubiquinone biosynthesis. The polypeptide is Ubiquinone biosynthesis protein COQ4 homolog, mitochondrial (Plasmodium falciparum (isolate 3D7)).